Consider the following 94-residue polypeptide: Large ribosomal subunit protein uL23c (94 aa).

It belongs to the universal ribosomal protein uL23 family. Part of the 50S ribosomal subunit.

The protein resides in the plastid. It is found in the chloroplast. Functionally, binds to 23S rRNA. This is Large ribosomal subunit protein uL23c (rpl23) from Tupiella akineta (Green alga).